A 185-amino-acid chain; its full sequence is Transcription termination/antitermination protein NusG (185 aa).

The 30-residue stretch at 134 to 163 (VGQQVRIVEGPFATFSGEVEEVMSERNKVR) folds into the KOW domain.

It belongs to the NusG family.

In terms of biological role, participates in transcription elongation, termination and antitermination. This Treponema pallidum (strain Nichols) protein is Transcription termination/antitermination protein NusG.